Here is a 160-residue protein sequence, read N- to C-terminus: Transcription elongation factor GreA (160 aa).

Belongs to the GreA/GreB family.

In terms of biological role, necessary for efficient RNA polymerase transcription elongation past template-encoded arresting sites. The arresting sites in DNA have the property of trapping a certain fraction of elongating RNA polymerases that pass through, resulting in locked ternary complexes. Cleavage of the nascent transcript by cleavage factors such as GreA or GreB allows the resumption of elongation from the new 3'terminus. GreA releases sequences of 2 to 3 nucleotides. The protein is Transcription elongation factor GreA of Francisella philomiragia subsp. philomiragia (strain ATCC 25017 / CCUG 19701 / FSC 153 / O#319-036).